An 86-amino-acid polypeptide reads, in one-letter code: Large ribosomal subunit protein bL31B (86 aa).

Belongs to the bacterial ribosomal protein bL31 family. Type B subfamily. As to quaternary structure, part of the 50S ribosomal subunit.

This is Large ribosomal subunit protein bL31B from Streptococcus equi subsp. equi (strain 4047).